A 476-amino-acid chain; its full sequence is Ribosomal protein uS12 methylthiotransferase RimO (476 aa).

The region spanning 33 to 143 (NRIGFVSLGC…VLKHVHKYVP (111 aa)) is the MTTase N-terminal domain. 6 residues coordinate [4Fe-4S] cluster: cysteine 42, cysteine 78, cysteine 107, cysteine 175, cysteine 179, and cysteine 182. One can recognise a Radical SAM core domain in the interval 161–398 (LTPKHYAYLK…MEVQAEISAE (238 aa)). Positions 401 to 467 (ARFVGRTMDI…EHDLWAELVD (67 aa)) constitute a TRAM domain.

This sequence belongs to the methylthiotransferase family. RimO subfamily. [4Fe-4S] cluster serves as cofactor.

Its subcellular location is the cytoplasm. The enzyme catalyses L-aspartate(89)-[ribosomal protein uS12]-hydrogen + (sulfur carrier)-SH + AH2 + 2 S-adenosyl-L-methionine = 3-methylsulfanyl-L-aspartate(89)-[ribosomal protein uS12]-hydrogen + (sulfur carrier)-H + 5'-deoxyadenosine + L-methionine + A + S-adenosyl-L-homocysteine + 2 H(+). Functionally, catalyzes the methylthiolation of an aspartic acid residue of ribosomal protein uS12. In Shewanella sp. (strain MR-4), this protein is Ribosomal protein uS12 methylthiotransferase RimO.